Consider the following 225-residue polypeptide: 2-C-methyl-D-erythritol 4-phosphate cytidylyltransferase (225 aa).

It belongs to the IspD/TarI cytidylyltransferase family. IspD subfamily.

It catalyses the reaction 2-C-methyl-D-erythritol 4-phosphate + CTP + H(+) = 4-CDP-2-C-methyl-D-erythritol + diphosphate. Its pathway is isoprenoid biosynthesis; isopentenyl diphosphate biosynthesis via DXP pathway; isopentenyl diphosphate from 1-deoxy-D-xylulose 5-phosphate: step 2/6. Catalyzes the formation of 4-diphosphocytidyl-2-C-methyl-D-erythritol from CTP and 2-C-methyl-D-erythritol 4-phosphate (MEP). This Chromobacterium violaceum (strain ATCC 12472 / DSM 30191 / JCM 1249 / CCUG 213 / NBRC 12614 / NCIMB 9131 / NCTC 9757 / MK) protein is 2-C-methyl-D-erythritol 4-phosphate cytidylyltransferase.